We begin with the raw amino-acid sequence, 141 residues long: MATIKVDVVSAEEQIFSGQAKFVALPGEAGELGILPGHTPLITRIRPGAVRIESESGDEEFVFVAGGILEVQPGAVTVLADTAIRGKDLDAAKAEEARKRAEETLQNAKSDIDLAKAQSELATAMAQLEAIQRLAKIRGKH.

Belongs to the ATPase epsilon chain family. As to quaternary structure, F-type ATPases have 2 components, CF(1) - the catalytic core - and CF(0) - the membrane proton channel. CF(1) has five subunits: alpha(3), beta(3), gamma(1), delta(1), epsilon(1). CF(0) has three main subunits: a, b and c.

It localises to the cell inner membrane. Functionally, produces ATP from ADP in the presence of a proton gradient across the membrane. This is ATP synthase epsilon chain from Burkholderia mallei (strain NCTC 10247).